Here is a 356-residue protein sequence, read N- to C-terminus: tRNA-specific 2-thiouridylase MnmA (356 aa).

ATP contacts are provided by residues 8–15 and methionine 34; that span reads GMSGGVDS. Cysteine 103 functions as the Nucleophile in the catalytic mechanism. Residues cysteine 103 and cysteine 199 are joined by a disulfide bond. An ATP-binding site is contributed by glycine 127. The interaction with tRNA stretch occupies residues 149 to 151; the sequence is KDQ. The active-site Cysteine persulfide intermediate is the cysteine 199. The segment at 305–306 is interaction with tRNA; that stretch reads RY.

Belongs to the MnmA/TRMU family.

It localises to the cytoplasm. It catalyses the reaction S-sulfanyl-L-cysteinyl-[protein] + uridine(34) in tRNA + AH2 + ATP = 2-thiouridine(34) in tRNA + L-cysteinyl-[protein] + A + AMP + diphosphate + H(+). In terms of biological role, catalyzes the 2-thiolation of uridine at the wobble position (U34) of tRNA, leading to the formation of s(2)U34. The chain is tRNA-specific 2-thiouridylase MnmA from Clostridium kluyveri (strain ATCC 8527 / DSM 555 / NBRC 12016 / NCIMB 10680 / K1).